We begin with the raw amino-acid sequence, 286 residues long: Cytochrome c oxidase subunit 3 (286 aa).

8 helical membrane-spanning segments follow: residues 13-33, 40-60, 85-105, 133-153, 173-195, 199-221, 223-243, and 253-273; these read GVFL…GVVI, VGTF…CFLI, IIQY…VVFF, IILD…NIIL, LCRE…LLFI, VWEF…LFSI, TLHF…IFNI, and IVLI…WFFL.

Belongs to the cytochrome c oxidase subunit 3 family. Component of the cytochrome c oxidase (complex IV, CIV), a multisubunit enzyme composed of a catalytic core of 3 subunits and several supernumerary subunits. The complex exists as a monomer or a dimer and forms supercomplexes (SCs) in the inner mitochondrial membrane with ubiquinol-cytochrome c oxidoreductase (cytochrome b-c1 complex, complex III, CIII).

It is found in the mitochondrion inner membrane. The catalysed reaction is 4 Fe(II)-[cytochrome c] + O2 + 8 H(+)(in) = 4 Fe(III)-[cytochrome c] + 2 H2O + 4 H(+)(out). Component of the cytochrome c oxidase, the last enzyme in the mitochondrial electron transport chain which drives oxidative phosphorylation. The respiratory chain contains 3 multisubunit complexes succinate dehydrogenase (complex II, CII), ubiquinol-cytochrome c oxidoreductase (cytochrome b-c1 complex, complex III, CIII) and cytochrome c oxidase (complex IV, CIV), that cooperate to transfer electrons derived from NADH and succinate to molecular oxygen, creating an electrochemical gradient over the inner membrane that drives transmembrane transport and the ATP synthase. Cytochrome c oxidase is the component of the respiratory chain that catalyzes the reduction of oxygen to water. Electrons originating from reduced cytochrome c in the intermembrane space (IMS) are transferred via the dinuclear copper A center (CU(A)) of subunit 2 and heme A of subunit 1 to the active site in subunit 1, a binuclear center (BNC) formed by heme A3 and copper B (CU(B)). The BNC reduces molecular oxygen to 2 water molecules using 4 electrons from cytochrome c in the IMS and 4 protons from the mitochondrial matrix. In Trypanoplasma borreli, this protein is Cytochrome c oxidase subunit 3 (COIII).